We begin with the raw amino-acid sequence, 514 residues long: Nucleus accumbens-associated protein 1 (514 aa).

Residues 30–94 form the BTB domain; sequence CDVSVVVKGH…CYTGRLSMNM (65 aa). Residue K167 forms a Glycyl lysine isopeptide (Lys-Gly) (interchain with G-Cter in SUMO1); alternate linkage. K167 is covalently cross-linked (Glycyl lysine isopeptide (Lys-Gly) (interchain with G-Cter in SUMO2); alternate). K182 is covalently cross-linked (Glycyl lysine isopeptide (Lys-Gly) (interchain with G-Cter in SUMO2)). Disordered regions lie at residues 183–218 and 241–279; these read RLWD…NRMP and GPSM…EEGT. S187 carries the post-translational modification Phosphoserine. Residues 242 to 251 show a composition bias toward polar residues; it reads PSMSERTSPG. S245 bears the Phosphoserine; by PKC mark. Low complexity predominate over residues 252-264; it reads TSSAYTSDSPSSY. Residues 267-279 are compositionally biased toward acidic residues; that stretch reads EEDEEEDAGEEGT. Glycyl lysine isopeptide (Lys-Gly) (interchain with G-Cter in SUMO2) cross-links involve residues K304, K438, K466, and K485. The region spanning 360 to 457 is the BEN domain; the sequence is GTNVYITRAQ…DMCTNARRVV (98 aa). 2 positions are modified to phosphoserine: S492 and S496.

As to quaternary structure, homooligomer; mediated by the BTB domain. Both isoforms interact with HDAC3 and HDAC4. Interacts (via BTB domain) with CUL3, PSMD7 and RCOR1. Post-translationally, phosphorylated by protein kinase C (PKC). As to expression, highly expressed in the hippocampus, brain cortex, cerebellum and brainstem. Expressed in the nucleus accumbens, olfactory tubercle, the striatum, frontal and parietal cortex and ventral pallidum. Weakly expressed in the heart, liver, kidney, spleen, testis, and skeletal muscle. Isoform 2 is expressed in the brain and liver, less abundantly expressed in the brain than isoform 1.

Its subcellular location is the nucleus. The protein resides in the cytoplasm. In terms of biological role, functions as a transcriptional repressor. Isoform 1 is a stronger transcriptional repressor than isoform 2. Seems to function as a transcriptional corepressor in neuronal cells through recruitment of HDAC3 and HDAC4. Contributes to tumor progression, and tumor cell proliferation and survival. This may be mediated at least in part through repressing transcriptional activity of GADD45GIP1. Required for recruiting the proteasome from the nucleus to the cytoplasm and dendritic spines. The protein is Nucleus accumbens-associated protein 1 (Nacc1) of Rattus norvegicus (Rat).